The following is a 227-amino-acid chain: NAD(P)H-hydrate epimerase (227 aa).

The YjeF N-terminal domain maps to 10–227; that stretch reads MRALETAAFN…GKIMVQYIGL (218 aa). 62 to 66 contributes to the (6S)-NADPHX binding site; that stretch reads NNGGD. Positions 63 and 142 each coordinate K(+). (6S)-NADPHX contacts are provided by residues 146–152 and aspartate 176; that span reads GIGLNRP. A K(+)-binding site is contributed by serine 179.

It belongs to the NnrE/AIBP family. K(+) serves as cofactor.

It carries out the reaction (6R)-NADHX = (6S)-NADHX. The catalysed reaction is (6R)-NADPHX = (6S)-NADPHX. Functionally, catalyzes the epimerization of the S- and R-forms of NAD(P)HX, a damaged form of NAD(P)H that is a result of enzymatic or heat-dependent hydration. This is a prerequisite for the S-specific NAD(P)H-hydrate dehydratase to allow the repair of both epimers of NAD(P)HX. This Roseobacter litoralis (strain ATCC 49566 / DSM 6996 / JCM 21268 / NBRC 15278 / OCh 149) protein is NAD(P)H-hydrate epimerase.